The primary structure comprises 338 residues: Ornithine carbamoyltransferase, catabolic (338 aa).

Residues 58–61 (STRT), Gln-85, Arg-109, and 136–139 (HPTQ) contribute to the carbamoyl phosphate site. L-ornithine is bound by residues Asn-168, Asp-232, and 236 to 237 (SM). Residues 273-274 (CL) and Arg-318 contribute to the carbamoyl phosphate site.

This sequence belongs to the aspartate/ornithine carbamoyltransferase superfamily. OTCase family.

The protein resides in the cytoplasm. The catalysed reaction is carbamoyl phosphate + L-ornithine = L-citrulline + phosphate + H(+). It functions in the pathway amino-acid degradation; L-arginine degradation via ADI pathway; carbamoyl phosphate from L-arginine: step 2/2. Functionally, reversibly catalyzes the transfer of the carbamoyl group from carbamoyl phosphate (CP) to the N(epsilon) atom of ornithine (ORN) to produce L-citrulline. The polypeptide is Ornithine carbamoyltransferase, catabolic (Streptococcus gordonii (strain Challis / ATCC 35105 / BCRC 15272 / CH1 / DL1 / V288)).